Reading from the N-terminus, the 193-residue chain is MGPWWALWLILTLPQILESQISAMSQGFPQMTSFQSDQFQGEWFVLGLADNTFRREHRALLNFFTTLFELKEKSQFQVTNSMTRGKHCNTWSYTLIPATKPGQFTRDNRGSGPGADRENIQVIETDYITFALVLSLRQTSSQNITRVSLLGRNWRLSHKTIDKFICLTRTQNLTKDNFLFPDLSDWLPDPQVC.

Residues 1–19 (MGPWWALWLILTLPQILES) form the signal peptide. Residues C88 and C193 are joined by a disulfide bond. N-linked (GlcNAc...) asparagine glycans are attached at residues N143 and N172.

It belongs to the calycin superfamily. Lipocalin family. In terms of assembly, monomer. Expressed in epididymis.

The protein localises to the secreted. In terms of biological role, binds all-trans retinoic acid and may act as a retinoid carrier protein within the epididymis. May play a role in male fertility. The sequence is that of Epididymal-specific lipocalin-12 (Lcn12) from Mus musculus (Mouse).